Consider the following 323-residue polypeptide: MADDFAYLNARVRVRRGTLLKESFFQEALDLSFADFLRLLSETVYGGELAGQGLPDVDRAVLRTQAKLVGDLPRLVTGEAREAVRLLLLRNDLHNLQALLRAKATGRPFEEVLLLPGTLREEVWRQAYEAQDPAGMAQVLAVPGHPLARALRAVLRETQDLARVEALLAKRFFEDVAKAAKGLDQPALRDYLALEVDAENLRTAFKLQGSGLAPDAFFLKGGRFVDRVRFARLMEGDYAVLDELSGTPFSGLSGVRDLKALERGLRCVLLKEAKKGVQDPLGVGLVLAYVKEREWEAVRLRLLARRAYFGLPRAQVEEEVVCP.

This sequence belongs to the V-ATPase V0D/AC39 subunit family.

Produces ATP from ADP in the presence of a proton gradient across the membrane. The polypeptide is V-type ATP synthase subunit C (atpC) (Thermus thermophilus (strain ATCC 27634 / DSM 579 / HB8)).